The sequence spans 299 residues: Oxygen-dependent coproporphyrinogen-III oxidase (299 aa).

Serine 92 provides a ligand contact to substrate. Residues histidine 96 and histidine 106 each coordinate a divalent metal cation. Histidine 106 functions as the Proton donor in the catalytic mechanism. 108–110 (NVR) contributes to the substrate binding site. The a divalent metal cation site is built by histidine 145 and histidine 175. The interval 239-274 (YVEFNLVYDRGTLFGLQSGGRAESILMSLPPRVRWE) is important for dimerization. 257 to 259 (GGR) serves as a coordination point for substrate.

Belongs to the aerobic coproporphyrinogen-III oxidase family. In terms of assembly, homodimer. Requires a divalent metal cation as cofactor.

The protein resides in the cytoplasm. The enzyme catalyses coproporphyrinogen III + O2 + 2 H(+) = protoporphyrinogen IX + 2 CO2 + 2 H2O. It functions in the pathway porphyrin-containing compound metabolism; protoporphyrin-IX biosynthesis; protoporphyrinogen-IX from coproporphyrinogen-III (O2 route): step 1/1. Involved in the heme biosynthesis. Catalyzes the aerobic oxidative decarboxylation of propionate groups of rings A and B of coproporphyrinogen-III to yield the vinyl groups in protoporphyrinogen-IX. This chain is Oxygen-dependent coproporphyrinogen-III oxidase, found in Xanthomonas euvesicatoria pv. vesicatoria (strain 85-10) (Xanthomonas campestris pv. vesicatoria).